We begin with the raw amino-acid sequence, 167 residues long: SAR-endolysin (167 aa).

The helical; Signal-anchor for type II membrane protein transmembrane segment at 10-32 (SVMAAISGGAIAIASVLITGPGG) threads the bilayer. Active-site proton donor/acceptor residues include Glu-37 and Asp-46.

This sequence belongs to the glycosyl hydrolase 24 family.

Its subcellular location is the host cell inner membrane. It carries out the reaction Hydrolysis of (1-&gt;4)-beta-linkages between N-acetylmuramic acid and N-acetyl-D-glucosamine residues in a peptidoglycan and between N-acetyl-D-glucosamine residues in chitodextrins.. Functionally, signal-arrest-release (SAR) endolysin with lysozyme activity that degrades host peptidoglycans and participates with the pinholin and spanin proteins in the sequential events which lead to programmed host cell lysis releasing the mature viral particles. Once the pinholin has permeabilized the host cell membrane, the SAR-endolysin is released into the periplasm where it breaks down the peptidoglycan layer. The sequence is that of SAR-endolysin (19) from Bacteriophage PS119.